Reading from the N-terminus, the 204-residue chain is Large ribosomal subunit protein eL15 (204 aa).

The protein belongs to the eukaryotic ribosomal protein eL15 family. Component of the large ribosomal subunit.

It localises to the cytoplasm. Functionally, component of the large ribosomal subunit. The ribosome is a large ribonucleoprotein complex responsible for the synthesis of proteins in the cell. The protein is Large ribosomal subunit protein eL15 (rpl15) of Cyprinus carpio (Common carp).